A 281-amino-acid chain; its full sequence is Ribulose-5-phosphate-3-epimerase, chloroplastic (281 aa).

The N-terminal 45 residues, 1–45, are a transit peptide targeting the chloroplast; the sequence is MSTSAASLCCSSTQVNGFGLRPERSLLYQPTSFSFSRRRTHGIVK. Serine 63 is a substrate binding site. Positions 88, 90, and 121 each coordinate a divalent metal cation. Aspartate 90 acts as the Proton acceptor in catalysis. Substrate-binding positions include histidine 121, 199–202, 232–234, and 254–256; these read GFGG, DGG, and GSA. Position 232 (aspartate 232) interacts with a divalent metal cation. Aspartate 232 serves as the catalytic Proton donor.

The protein belongs to the ribulose-phosphate 3-epimerase family. Homooctamer. Co(2+) serves as cofactor. Requires Fe(2+) as cofactor. It depends on Mn(2+) as a cofactor. Zn(2+) is required as a cofactor. As to expression, present in roots, seeds and flowers. Accumulates in nematode feeding sites (NFS).

The protein localises to the plastid. It is found in the chloroplast thylakoid membrane. The catalysed reaction is D-ribulose 5-phosphate = D-xylulose 5-phosphate. The protein operates within carbohydrate biosynthesis; Calvin cycle. Its function is as follows. Essential protein required during embryogenesis. Catalyzes the reversible epimerization of D-ribulose 5-phosphate to D-xylulose 5-phosphate. Essential for the early steps of nematode feeding sites (NFS, multinucleated root cells) formation induced by the root-knot nematodes Heterodera schachtii, Meloidogyne incognita, M.javanica and M.hapla. The polypeptide is Ribulose-5-phosphate-3-epimerase, chloroplastic (Arabidopsis thaliana (Mouse-ear cress)).